A 61-amino-acid polypeptide reads, in one-letter code: Large ribosomal subunit protein eL37 (61 aa).

Zn(2+) contacts are provided by cysteine 19, cysteine 22, cysteine 34, and cysteine 37. The C4-type zinc-finger motif lies at 19 to 37 (CRRCGRNSFNARKGYCAAC).

The protein belongs to the eukaryotic ribosomal protein eL37 family. It depends on Zn(2+) as a cofactor.

In terms of biological role, binds to the 23S rRNA. The protein is Large ribosomal subunit protein eL37 of Sulfolobus acidocaldarius (strain ATCC 33909 / DSM 639 / JCM 8929 / NBRC 15157 / NCIMB 11770).